Reading from the N-terminus, the 456-residue chain is Amino acid transporter AVT6B (456 aa).

11 consecutive transmembrane segments (helical) span residues 37-57 (FSGA…MALP), 58-78 (ATMK…MAFL), 118-138 (ILVS…DVLA), 164-184 (TFVL…FKRI), 191-211 (SAIS…ITII), 236-256 (LFTV…VHSI), 273-293 (ALAM…LLFG), 328-348 (LMLV…GLIF), 365-385 (SITA…PSIW), 388-408 (FQFT…AAVI), and 423-443 (IAIC…YSDA).

Belongs to the amino acid/polyamine transporter 2 family. Amino acid/auxin permease (AAAP) (TC 2.A.18.6) subfamily.

The protein localises to the membrane. This Arabidopsis thaliana (Mouse-ear cress) protein is Amino acid transporter AVT6B.